The chain runs to 461 residues: MKNTSSSTTLTMNDTIAAIATPLGKGAISIIKISGHNALNILKQLTQKQDFTPRYAYVCDIFSDGVLLDKALVIYFKAPYSFTGEDVCEIQCHGSPLLAQNILQACLNLGARLAKAGEFSKKAFLNHKMDLSEIEASVQLILCEDESVLNALARQLKGELKIFIEEARNNLLKLLASSEVLIDYSEEDIPSDFLKEVSFNLEKQIASFKDLLDFSNAQKQRNKGHALSIVGKPNAGKSSLLNAMLLEERALVSDIKGTTRDTIEEVIELKGHKVRLIDTAGIRESADEIERLGIEKSLKSLENCDIILGVFDLSKPLEKEDFNLMDTLNRTKKPCIVVLNKNDLAPKLELEILKSYLKIPYSILETNTLNSKACLKDLSQKISEFFPKLDTQNKLLLTSLAQTTALENAITELQNAKSHLDTLELFSYHILSAIENLNLLTRPYETSQMLDSMFSEFCLGK.

Positions 32, 89, and 128 each coordinate (6S)-5-formyl-5,6,7,8-tetrahydrofolate. The TrmE-type G domain maps to 224–387 (GHALSIVGKP…LSQKISEFFP (164 aa)). A K(+)-binding site is contributed by N234. Residues 234 to 239 (NAGKSS), 253 to 259 (SDIKGTT), and 278 to 281 (DTAG) each bind GTP. Mg(2+) is bound at residue S238. K(+) contacts are provided by S253, I255, and T258. T259 provides a ligand contact to Mg(2+). K461 lines the (6S)-5-formyl-5,6,7,8-tetrahydrofolate pocket.

It belongs to the TRAFAC class TrmE-Era-EngA-EngB-Septin-like GTPase superfamily. TrmE GTPase family. As to quaternary structure, homodimer. Heterotetramer of two MnmE and two MnmG subunits. K(+) is required as a cofactor.

The protein localises to the cytoplasm. In terms of biological role, exhibits a very high intrinsic GTPase hydrolysis rate. Involved in the addition of a carboxymethylaminomethyl (cmnm) group at the wobble position (U34) of certain tRNAs, forming tRNA-cmnm(5)s(2)U34. The polypeptide is tRNA modification GTPase MnmE (Helicobacter pylori (strain J99 / ATCC 700824) (Campylobacter pylori J99)).